The primary structure comprises 377 residues: Succinyl-diaminopimelate desuccinylase (377 aa).

His-67 lines the Zn(2+) pocket. Asp-69 is an active-site residue. Residue Asp-100 participates in Zn(2+) binding. Glu-134 (proton acceptor) is an active-site residue. The Zn(2+) site is built by Glu-135, Glu-163, and His-349.

Belongs to the peptidase M20A family. DapE subfamily. As to quaternary structure, homodimer. Zn(2+) serves as cofactor. It depends on Co(2+) as a cofactor.

It carries out the reaction N-succinyl-(2S,6S)-2,6-diaminopimelate + H2O = (2S,6S)-2,6-diaminopimelate + succinate. It functions in the pathway amino-acid biosynthesis; L-lysine biosynthesis via DAP pathway; LL-2,6-diaminopimelate from (S)-tetrahydrodipicolinate (succinylase route): step 3/3. Its function is as follows. Catalyzes the hydrolysis of N-succinyl-L,L-diaminopimelic acid (SDAP), forming succinate and LL-2,6-diaminopimelate (DAP), an intermediate involved in the bacterial biosynthesis of lysine and meso-diaminopimelic acid, an essential component of bacterial cell walls. The sequence is that of Succinyl-diaminopimelate desuccinylase from Glaesserella parasuis serovar 5 (strain SH0165) (Haemophilus parasuis).